Reading from the N-terminus, the 545-residue chain is Probable acyl-activating enzyme 4 (545 aa).

The protein belongs to the ATP-dependent AMP-binding enzyme family. As to expression, expressed in roots, leaves, stems, flowers and developing seeds.

May act as an acid--thiol ligase that activates carboxylic acids by forming acyl-CoAs. The polypeptide is Probable acyl-activating enzyme 4 (AEE4) (Arabidopsis thaliana (Mouse-ear cress)).